The chain runs to 664 residues: L-type lectin-domain containing receptor kinase I.3 (664 aa).

An N-terminal signal peptide occupies residues 1–21; the sequence is MACRLYLALIFSCVYLICLSS. The Extracellular portion of the chain corresponds to 22-286; sequence QQETGFVYNG…PKEEKKKLSP (265 aa). The legume-lectin like stretch occupies residues 24 to 257; sequence ETGFVYNGFE…NHYILGWSFS (234 aa). 7 N-linked (GlcNAc...) asparagine glycosylation sites follow: N55, N125, N128, N181, N204, N225, and N267. Residues 287-307 form a helical membrane-spanning segment; the sequence is LLIGLVILLVIPVVMVLGGVY. Residues 308-664 lie on the Cytoplasmic side of the membrane; that stretch reads WYRRKKYAEV…THTILDGHGR (357 aa). One can recognise a Protein kinase domain in the interval 342–619; the sequence is FRKDCRVGKG…LNQDLPLPIF (278 aa). Residues 348–356 and K370 each bind ATP; that span reads VGKGGFGEV. D466 acts as the Proton acceptor in catalysis.

It in the C-terminal section; belongs to the protein kinase superfamily. Ser/Thr protein kinase family. In the N-terminal section; belongs to the leguminous lectin family. Post-translationally, autophosphorylated on Ser and Thr residues. In terms of tissue distribution, mostly expressed in roots and flowers, and, to a lower extent, in leaves.

It localises to the cell membrane. The enzyme catalyses L-seryl-[protein] + ATP = O-phospho-L-seryl-[protein] + ADP + H(+). It carries out the reaction L-threonyl-[protein] + ATP = O-phospho-L-threonyl-[protein] + ADP + H(+). Involved in resistance response to the pathogenic fungus Alternaria brassicicola. The chain is L-type lectin-domain containing receptor kinase I.3 from Arabidopsis thaliana (Mouse-ear cress).